A 109-amino-acid polypeptide reads, in one-letter code: Small ribosomal subunit protein uS17 (109 aa).

It belongs to the universal ribosomal protein uS17 family. Part of the 30S ribosomal subunit.

One of the primary rRNA binding proteins, it binds specifically to the 5'-end of 16S ribosomal RNA. The polypeptide is Small ribosomal subunit protein uS17 (Thermoplasma volcanium (strain ATCC 51530 / DSM 4299 / JCM 9571 / NBRC 15438 / GSS1)).